Here is a 174-residue protein sequence, read N- to C-terminus: Mating-type protein ALPHA2 (174 aa).

The homeobox; TALE-type DNA-binding region spans Gln108–Pro170.

It belongs to the TALE/M-ATYP homeobox family. As to quaternary structure, forms a heterodimer with A1.

The protein localises to the nucleus. In terms of biological role, mating type proteins are sequence specific DNA-binding proteins that act as master switches in yeast differentiation by controlling gene expression in a cell type-specific fashion. Transcriptional corepressor that acts in conjunction with A1 to repress transcription of haploid-specific genes and of MATALPHA1. The sequence is that of Mating-type protein ALPHA2 (MATALPHA2) from Nakaseomyces delphensis (Yeast).